The primary structure comprises 2148 residues: General transcription factor 3C polypeptide 1 (2148 aa).

Acidic residues predominate over residues 473 to 487 (GEEAFLSDSESEEES). Disordered stretches follow at residues 473 to 568 (GEEA…FDPH) and 587 to 609 (NPKE…KPHK). Basic residues predominate over residues 491–502 (GKRRGRGSRGHS). Lys-533 is covalently cross-linked (Glycyl lysine isopeptide (Lys-Gly) (interchain with G-Cter in SUMO2)). Ser-666 bears the Phosphoserine mark. 2 disordered regions span residues 717–771 (STAN…EKMG) and 818–863 (TGEQ…SSWE). 2 stretches are compositionally biased toward basic and acidic residues: residues 759–770 (ESTRVKKTDEKM) and 825–835 (HSERKTGKQEP). Glycyl lysine isopeptide (Lys-Gly) (interchain with G-Cter in SUMO2) cross-links involve residues Lys-769 and Lys-832. Ser-1062 is modified (phosphoserine). Basic and acidic residues predominate over residues 1186-1195 (EHFELDREPT). Disordered stretches follow at residues 1186–1238 (EHFE…KKLR), 1597–1627 (KSLG…SVEV), 1823–1881 (KASG…LPAK), 1893–1928 (SPRP…ESVG), and 2127–2148 (PRPS…ATSR). Thr-1195 bears the Phosphothreonine mark. Over residues 1198 to 1214 (RNRKVRGGKSQKRKRLK) the composition is skewed to basic residues. The segment covering 1228 to 1238 (EHPEAKSKKLR) has biased composition (basic and acidic residues). Residues 1605 to 1616 (LDDDDEEEDLDE) show a composition bias toward acidic residues. Phosphoserine is present on residues Ser-1624, Ser-1853, and Ser-1893. The span at 1903–1912 (EAQAQFAAPE) shows a compositional bias: low complexity. Residues 2132–2148 (SCYQSSAQPSTGVATSR) show a composition bias toward polar residues.

Belongs to the TFIIIC subunit 1 family. In terms of assembly, part of the TFIIIC subcomplex TFIIIC2, consisting of six subunits, GTF3C1, GTF3C2, GTF3C3, GTF3C4, GTF3C5 and GTF3C6. Interacts with IGHMBP2. Interacts with MAF1.

The protein resides in the nucleus. Functionally, required for RNA polymerase III-mediated transcription. Component of TFIIIC that initiates transcription complex assembly on tRNA and is required for transcription of 5S rRNA and other stable nuclear and cytoplasmic RNAs. Binds to the box B promoter element. The chain is General transcription factor 3C polypeptide 1 (Gtf3c1) from Rattus norvegicus (Rat).